Reading from the N-terminus, the 539-residue chain is Chaperonin GroEL (539 aa).

Residues threonine 29–proline 32, aspartate 86–threonine 90, glycine 413, and aspartate 492 contribute to the ATP site.

The protein belongs to the chaperonin (HSP60) family. In terms of assembly, forms a cylinder of 14 subunits composed of two heptameric rings stacked back-to-back. Interacts with the co-chaperonin GroES.

The protein resides in the cytoplasm. It carries out the reaction ATP + H2O + a folded polypeptide = ADP + phosphate + an unfolded polypeptide.. Its function is as follows. Together with its co-chaperonin GroES, plays an essential role in assisting protein folding. The GroEL-GroES system forms a nano-cage that allows encapsulation of the non-native substrate proteins and provides a physical environment optimized to promote and accelerate protein folding. This Fusobacterium nucleatum subsp. polymorphum (Fusobacterium polymorphum) protein is Chaperonin GroEL.